Here is a 279-residue protein sequence, read N- to C-terminus: MAAPVRRTLLGVAGGWRRFERLRAGSLSSRSLALAAAPSSNGSPWRLLGALCLQRPPAVSKPLTPFQEEMASLLQQIEIERSLYSDHELRALDENQRLAGKKADLYDEEDEEDILLAQDLEDMWEQTFLQFKLGARITEADEKNDRTSLNRKLDRNLVLLVREKFGDQDVWILPQTEWQPGETLRGTAERTLATLSENNMEAKFLGNAPCGHYTFKFPQAMRTESNLGAKVFFFKALLLTGDFSQAGNKGHHVWVTKDELGDYLKPKYLAQVRRFLSDL.

Lys-230 carries the post-translational modification N6-acetyllysine.

It belongs to the mitochondrion-specific ribosomal protein mL46 family. As to quaternary structure, component of the mitochondrial ribosome large subunit (39S) which comprises a 16S rRNA and about 50 distinct proteins.

The protein resides in the mitochondrion. This chain is Large ribosomal subunit protein mL46 (MRPL46), found in Pongo abelii (Sumatran orangutan).